The primary structure comprises 276 residues: Formamidopyrimidine-DNA glycosylase (276 aa).

Residue Pro-2 is the Schiff-base intermediate with DNA of the active site. Catalysis depends on Glu-3, which acts as the Proton donor. Lys-60 (proton donor; for beta-elimination activity) is an active-site residue. Positions 93 and 112 each coordinate DNA. The FPG-type zinc-finger motif lies at 240–274; sequence HVYGRKQQPCHHCDTAIEKTVVGGRGTHYCPNCQP. Arg-264 functions as the Proton donor; for delta-elimination activity in the catalytic mechanism.

The protein belongs to the FPG family. Monomer. Zn(2+) serves as cofactor.

It carries out the reaction Hydrolysis of DNA containing ring-opened 7-methylguanine residues, releasing 2,6-diamino-4-hydroxy-5-(N-methyl)formamidopyrimidine.. It catalyses the reaction 2'-deoxyribonucleotide-(2'-deoxyribose 5'-phosphate)-2'-deoxyribonucleotide-DNA = a 3'-end 2'-deoxyribonucleotide-(2,3-dehydro-2,3-deoxyribose 5'-phosphate)-DNA + a 5'-end 5'-phospho-2'-deoxyribonucleoside-DNA + H(+). Involved in base excision repair of DNA damaged by oxidation or by mutagenic agents. Acts as a DNA glycosylase that recognizes and removes damaged bases. Has a preference for oxidized purines, such as 7,8-dihydro-8-oxoguanine (8-oxoG). Has AP (apurinic/apyrimidinic) lyase activity and introduces nicks in the DNA strand. Cleaves the DNA backbone by beta-delta elimination to generate a single-strand break at the site of the removed base with both 3'- and 5'-phosphates. This is Formamidopyrimidine-DNA glycosylase from Shouchella clausii (strain KSM-K16) (Alkalihalobacillus clausii).